The sequence spans 2961 residues: Zinc finger ZZ-type and EF-hand domain-containing protein 1 (2961 aa).

Residues 1 to 41 are disordered; sequence MGNAPSHSSEDEAAAAGGEGWGPHQDWAAVSGTTPGPGVAA. The N-myristoyl glycine moiety is linked to residue G2. Residues 111-146 enclose the EF-hand domain; that stretch reads CSSEQFEEAFAQFDAEGDGTVDAENMLEALKNSSGA. The region spanning 226 to 405 is the DOC domain; sequence LVQKEKESPG…AIWYWSLLTS (180 aa). 4 positions are modified to phosphoserine: S240, S1475, S1488, and S1509. Positions 1446 to 1531 are disordered; the sequence is TADETSHLQP…PTRRPPFTRG (86 aa). A compositionally biased stretch (polar residues) spans 1485–1502; the sequence is GDQSPGLGTQPKLPSSSG. T1512 carries the phosphothreonine modification. A compositionally biased stretch (low complexity) spans 1516–1531; the sequence is PLSPSTPTRRPPFTRG. S1518 is modified (phosphoserine). T1521 and T1523 each carry phosphothreonine. Phosphoserine is present on residues S1537 and S1540. 2 ZZ-type zinc fingers span residues 1778–1833 and 1827–1882; these read NVDI…FTCD and NMEF…MVTI. Positions 1783, 1786, 1797, 1800, 1806, 1809, 1819, 1823, 1832, 1835, 1846, 1849, 1855, 1858, 1868, and 1872 each coordinate Zn(2+). Disordered stretches follow at residues 1994 to 2078 and 2426 to 2455; these read AVQG…PSPE and LELD…KLDP. Positions 2009–2027 are enriched in basic and acidic residues; that stretch reads AVHEEIRPVDFKQRNKADK. Residues 2033–2043 are compositionally biased toward polar residues; the sequence is KDPSCQTQISD. Basic and acidic residues predominate over residues 2426–2440; sequence LELDERGDREEEVER. S2444 is modified (phosphoserine). K2667 carries the post-translational modification N6-acetyllysine.

Interacts with KLF6 and KLF9. Interacts via (ZZ-type 2 zinc finger) with histone H3 trimethylated at 'Lys-4' (H3K4me3) and histone H3 acetylated at 'Lys-4' (H3K4ac). Expressed at low levels in cerebellum.

Its function is as follows. Histone H3 reader which may act as a transcriptional coactivator for KLF6 and KLF9 transcription factors. The chain is Zinc finger ZZ-type and EF-hand domain-containing protein 1 from Homo sapiens (Human).